The primary structure comprises 420 residues: O-methyltransferase penK (420 aa).

Asp-285 lines the S-adenosyl-L-methionine pocket. Catalysis depends on His-325, which acts as the Proton acceptor.

This sequence belongs to the class I-like SAM-binding methyltransferase superfamily. Cation-independent O-methyltransferase family.

The protein operates within secondary metabolite biosynthesis. It functions in the pathway alkaloid biosynthesis. Its pathway is mycotoxin biosynthesis. Functionally, O-methyltransferase; part of the gene cluster that mediates the biosynthesis of penigequinolones, potent insecticidal alkaloids that contain a highly modified 10-carbon prenyl group. The first stage is catalyzed by the nonribosomal peptide synthetase penN that condenses anthranilic acid and O-methyl-L-tyrosine to produce 4'-methoxycyclopeptin. 4'-methoxycyclopeptin is then converted to 4'-methoxydehydrocyclopeptin by the ketoglutarate-dependent dioxygenase penM through dehydrogenation to form a double bond between C-alpha and C-beta of the O-methyltyrosine side chain. PenM also converts its first product methoxydehydrocyclopeptin to 4'-methoxycyclopenin. The following conversion of 4'methoxycyclopenin into 4'-methoxyviridicatin is catalyzed by the cyclopenase penL. 4'-methoxyviridicatin is the precursor of quinolone natural products, and is further converted to quinolinone B. The prenyltransferase penI then catalyzes the canonical Friedel-Crafts alkylation of quinolinone B with dimethylallyl cation to yield dimethylallyl quinolone, which is subjected to FAD-dependent dehydrogenation by the FAD-linked oxidoreductase penH to yield conjugated aryl diene. The delta(3') double bond then serves as the site of the second alkylation with DMAPP catalyzed by the prenyltransferase penG to yield a carbenium ion intermediate, which can be attacked by H(2)O to yield a styrenyl quinolone containing a C3'-hydroxyprenyl chain, or undergo cyclization to yield yaequinolones J1 and J2. The conversion of the styrenyl quinolone into the tetrahydrofuran-containing yaequinolone C is performed by the FAD-dependent monooxygenase penE and involves epoxidation of the terminal C7'-C8' olefin, followed by epoxide ring opening initiated by the C3' hydroxyl group. The predicted cysteine hydrolase penJ acts as an epoxide hydrolase that enhances the rate of the 5-exo-tet cyclization step, increasing the yield of yaequinolone C. PenF catalyzes the cationic rearrangement of the epoxide formed by penE (before ring opening to produce yaequinolone C) into yaequinolone D. Finally, the short-chain dehydrogenase/reductase (SDR)-like reductase penD, catalyzes both the dehydration of yaequinolone D and the reduction of the resulting oxonium to yield penigequinolone. The chain is O-methyltransferase penK from Penicillium thymicola.